A 667-amino-acid polypeptide reads, in one-letter code: Polypeptide N-acetylgalactosaminyltransferase 3 (667 aa).

Residues 1–12 (MGLRFQQLKKLW) lie on the Cytoplasmic side of the membrane. A helical; Signal-anchor for type II membrane protein transmembrane segment spans residues 13–35 (LLYLFLLFFAFFMFAISINLYVA). The Lumenal segment spans residues 36 to 667 (SIQGGDAEMR…WGFIPLPWRM (632 aa)). Asn75 and Asn129 each carry an N-linked (GlcNAc...) asparagine glycan. Intrachain disulfides connect Cys140–Cys375, Cys366–Cys446, Cys526–Cys547, Cys572–Cys601, and Cys626–Cys649. The tract at residues 149 to 259 (LPSTSVIIVF…RGWLEPLLSR (111 aa)) is catalytic subdomain A. Positions 190 and 220 each coordinate substrate. Residues Asp243 and His245 each coordinate Mn(2+). Residues Asn279 and Asn313 are each glycosylated (N-linked (GlcNAc...) asparagine). The interval 321 to 383 (PIATPGMAGG…PCSHVGHVFR (63 aa)) is catalytic subdomain B. Trp352 lines the substrate pocket. Residue His380 participates in Mn(2+) binding. Arg383 and Tyr388 together coordinate substrate. N-linked (GlcNAc...) asparagine glycosylation is present at Asn433. Positions 513–661 (EELMALIDLE…KDITQKWGFI (149 aa)) constitute a Ricin B-type lectin domain. Asn590 carries an N-linked (GlcNAc...) asparagine glycan.

This sequence belongs to the glycosyltransferase 2 family. GalNAc-T subfamily. The cofactor is Mn(2+). In terms of tissue distribution, expressed in developing oocytes and egg chambers. During embryonic stages 9-11, expressed in the primordiums of the foregut, midgut and hindgut. During embryonic stages 12-13, expression is found uniquely in the posterior spiracle. During embryonic stages 14-17, expressed in the pharynx, esophagus and posterior spiracles. Expression observed in the epidermis during embryonic stages 16-17. In third instar larvae, expressed ubiquitously in wing, with increased expression in pleura and notum, eye-antennal, leg and haltere imaginal disks.

Its subcellular location is the golgi apparatus membrane. It carries out the reaction L-seryl-[protein] + UDP-N-acetyl-alpha-D-galactosamine = a 3-O-[N-acetyl-alpha-D-galactosaminyl]-L-seryl-[protein] + UDP + H(+). The catalysed reaction is L-threonyl-[protein] + UDP-N-acetyl-alpha-D-galactosamine = a 3-O-[N-acetyl-alpha-D-galactosaminyl]-L-threonyl-[protein] + UDP + H(+). It functions in the pathway protein modification; protein glycosylation. In terms of biological role, catalyzes the initial reaction in O-linked oligosaccharide biosynthesis, the transfer of an N-acetyl-D-galactosamine residue to a serine or threonine residue on the protein receptor. It can both act as a peptide transferase that transfers GalNAc onto unmodified peptide substrates, and as a glycopeptide transferase that requires the prior addition of a GalNAc on a peptide before adding additional GalNAc moieties. Prefers EA2 as substrate. Has weak activity toward Muc5AC-3, -13 and -3/13 substrates. Plays a critical role in the regulation of integrin-mediated cell adhesion during wing development by influencing, via glycosylation, the secretion and localization of the integrin ligand Tig to the basal cell layer interface. Might have a role in protein O-glycosylation in the Golgi and thereby in establishing and/or maintaining a proper secretory apparatus structure. Together with Pgant35A, regulates integrin levels and activity-dependent integrin signaling at the synapse in neurons and muscles. The protein is Polypeptide N-acetylgalactosaminyltransferase 3 of Drosophila melanogaster (Fruit fly).